Consider the following 449-residue polypeptide: UDP-N-acetylmuramoylalanine--D-glutamate ligase (449 aa).

118-124 contacts ATP; that stretch reads GTNGKTT.

This sequence belongs to the MurCDEF family.

Its subcellular location is the cytoplasm. The catalysed reaction is UDP-N-acetyl-alpha-D-muramoyl-L-alanine + D-glutamate + ATP = UDP-N-acetyl-alpha-D-muramoyl-L-alanyl-D-glutamate + ADP + phosphate + H(+). The protein operates within cell wall biogenesis; peptidoglycan biosynthesis. Its function is as follows. Cell wall formation. Catalyzes the addition of glutamate to the nucleotide precursor UDP-N-acetylmuramoyl-L-alanine (UMA). The sequence is that of UDP-N-acetylmuramoylalanine--D-glutamate ligase from Staphylococcus saprophyticus subsp. saprophyticus (strain ATCC 15305 / DSM 20229 / NCIMB 8711 / NCTC 7292 / S-41).